Reading from the N-terminus, the 444-residue chain is Methylenetetrahydrofolate--tRNA-(uracil-5-)-methyltransferase TrmFO (444 aa).

Residue 10 to 15 coordinates FAD; sequence GAGLAG.

The protein belongs to the MnmG family. TrmFO subfamily. FAD serves as cofactor.

It localises to the cytoplasm. It carries out the reaction uridine(54) in tRNA + (6R)-5,10-methylene-5,6,7,8-tetrahydrofolate + NADH + H(+) = 5-methyluridine(54) in tRNA + (6S)-5,6,7,8-tetrahydrofolate + NAD(+). The enzyme catalyses uridine(54) in tRNA + (6R)-5,10-methylene-5,6,7,8-tetrahydrofolate + NADPH + H(+) = 5-methyluridine(54) in tRNA + (6S)-5,6,7,8-tetrahydrofolate + NADP(+). Catalyzes the folate-dependent formation of 5-methyl-uridine at position 54 (M-5-U54) in all tRNAs. The sequence is that of Methylenetetrahydrofolate--tRNA-(uracil-5-)-methyltransferase TrmFO from Streptococcus sanguinis (strain SK36).